We begin with the raw amino-acid sequence, 75 residues long: Protein SlyX homolog (75 aa).

It belongs to the SlyX family.

In Vibrio atlanticus (strain LGP32) (Vibrio splendidus (strain Mel32)), this protein is Protein SlyX homolog.